The chain runs to 394 residues: Flap endonuclease 1-A (394 aa).

Residues 1-105 (MGIKGLTGLL…GVLSKRLERR (105 aa)) are N-domain. Residue Asp34 coordinates Mg(2+). Residues Arg47 and Arg71 each contribute to the DNA site. Positions 87, 159, 161, 180, and 182 each coordinate Mg(2+). The tract at residues 123-254 (DVDRFSRRTV…KSALKLIREY (132 aa)) is I-domain. Position 159 (Glu159) interacts with DNA. The DNA site is built by Gly232 and Asp234. Asp234 lines the Mg(2+) pocket. The interaction with PCNA stretch occupies residues 341-349 (QQGRLDGFF). A disordered region spans residues 356–375 (KAAAPAPVGKAKGKGKVDAK).

It belongs to the XPG/RAD2 endonuclease family. FEN1 subfamily. In terms of assembly, interacts with PCNA. Three molecules of FEN1 bind to one PCNA trimer with each molecule binding to one PCNA monomer. PCNA stimulates the nuclease activity without altering cleavage specificity. The cofactor is Mg(2+). In terms of processing, phosphorylated. Phosphorylation upon DNA damage induces relocalization to the nuclear plasma.

The protein localises to the nucleus. Its subcellular location is the nucleolus. It is found in the nucleoplasm. The protein resides in the mitochondrion. Structure-specific nuclease with 5'-flap endonuclease and 5'-3' exonuclease activities involved in DNA replication and repair. During DNA replication, cleaves the 5'-overhanging flap structure that is generated by displacement synthesis when DNA polymerase encounters the 5'-end of a downstream Okazaki fragment. It enters the flap from the 5'-end and then tracks to cleave the flap base, leaving a nick for ligation. Also involved in the long patch base excision repair (LP-BER) pathway, by cleaving within the apurinic/apyrimidinic (AP) site-terminated flap. Acts as a genome stabilization factor that prevents flaps from equilibrating into structures that lead to duplications and deletions. Also possesses 5'-3' exonuclease activity on nicked or gapped double-stranded DNA, and exhibits RNase H activity. Also involved in replication and repair of rDNA and in repairing mitochondrial DNA. The sequence is that of Flap endonuclease 1-A from Laccaria bicolor (strain S238N-H82 / ATCC MYA-4686) (Bicoloured deceiver).